A 415-amino-acid polypeptide reads, in one-letter code: Arrestin domain-containing protein 4 (415 aa).

2 short sequence motifs (PPxY motif) span residues 347 to 350 (PPNY) and 392 to 395 (PPLY).

This sequence belongs to the arrestin family. In terms of assembly, interacts with ADRB2. Interacts (via PPxY motifs) with ITCH, NEDD4L and WWP2. Interacts with AVPR2. Identified in a complex containing at least ARRDC4, AVPR2 and HGS. Interacts with SLC11A2; controls the incorporation of SLC11A2 into extracellular vesicles through an ubiquitination-dependent mechanism. Interacts with TRIM65.

It localises to the early endosome. Its subcellular location is the cell membrane. The protein localises to the cytoplasmic vesicle. In terms of biological role, functions as an adapter recruiting ubiquitin-protein ligases to their specific substrates. Plays a role in endocytosis of activated G protein-coupled receptors (GPCRs). Through an ubiquitination-dependent mechanism also plays a role in the incorporation of SLC11A2 into extracellular vesicles. May play a role in glucose uptake. Participates in innate immune response by promoting IFIH1/MDA5 activation through interaction with TRIM65. The polypeptide is Arrestin domain-containing protein 4 (Mus musculus (Mouse)).